Consider the following 253-residue polypeptide: Tryptophan synthase alpha chain (253 aa).

Active-site proton acceptor residues include E45 and D56.

This sequence belongs to the TrpA family. As to quaternary structure, tetramer of two alpha and two beta chains.

It carries out the reaction (1S,2R)-1-C-(indol-3-yl)glycerol 3-phosphate + L-serine = D-glyceraldehyde 3-phosphate + L-tryptophan + H2O. It participates in amino-acid biosynthesis; L-tryptophan biosynthesis; L-tryptophan from chorismate: step 5/5. Its function is as follows. The alpha subunit is responsible for the aldol cleavage of indoleglycerol phosphate to indole and glyceraldehyde 3-phosphate. The chain is Tryptophan synthase alpha chain from Flavobacterium johnsoniae (strain ATCC 17061 / DSM 2064 / JCM 8514 / BCRC 14874 / CCUG 350202 / NBRC 14942 / NCIMB 11054 / UW101) (Cytophaga johnsonae).